Reading from the N-terminus, the 76-residue chain is Small ribosomal subunit protein bS18 (76 aa).

Belongs to the bacterial ribosomal protein bS18 family. Part of the 30S ribosomal subunit. Forms a tight heterodimer with protein bS6.

Binds as a heterodimer with protein bS6 to the central domain of the 16S rRNA, where it helps stabilize the platform of the 30S subunit. The polypeptide is Small ribosomal subunit protein bS18 (Stenotrophomonas maltophilia (strain R551-3)).